Reading from the N-terminus, the 106-residue chain is Nucleoid-associated protein BBta_7345 (106 aa).

Belongs to the YbaB/EbfC family. In terms of assembly, homodimer.

The protein localises to the cytoplasm. The protein resides in the nucleoid. Its function is as follows. Binds to DNA and alters its conformation. May be involved in regulation of gene expression, nucleoid organization and DNA protection. In Bradyrhizobium sp. (strain BTAi1 / ATCC BAA-1182), this protein is Nucleoid-associated protein BBta_7345.